The following is a 98-amino-acid chain: MLCLADIRIVASCSAAIKSGYGQQPWLAHVAGPYANSLFDDVPADSYHAAVEYLRLIPASCYLLDGYAAGRDDCRAHCIAPRNRRLYCASYQVCVCRY.

3 cysteine pairs are disulfide-bonded: Cys61/Cys88, Cys74/Cys94, and Cys78/Cys96.

The protein belongs to the invertebrate defensin family. Type 1 subfamily.

The protein is Defensin of Mamestra brassicae (Cabbage moth).